A 456-amino-acid chain; its full sequence is Probable glycine dehydrogenase (decarboxylating) subunit 1 (456 aa).

This sequence belongs to the GcvP family. N-terminal subunit subfamily. As to quaternary structure, the glycine cleavage system is composed of four proteins: P, T, L and H. In this organism, the P 'protein' is a heterodimer of two subunits.

It catalyses the reaction N(6)-[(R)-lipoyl]-L-lysyl-[glycine-cleavage complex H protein] + glycine + H(+) = N(6)-[(R)-S(8)-aminomethyldihydrolipoyl]-L-lysyl-[glycine-cleavage complex H protein] + CO2. In terms of biological role, the glycine cleavage system catalyzes the degradation of glycine. The P protein binds the alpha-amino group of glycine through its pyridoxal phosphate cofactor; CO(2) is released and the remaining methylamine moiety is then transferred to the lipoamide cofactor of the H protein. This Legionella pneumophila (strain Lens) protein is Probable glycine dehydrogenase (decarboxylating) subunit 1.